The primary structure comprises 220 residues: Mediator of RNA polymerase II transcription subunit 19 (220 aa).

Positions 171 to 220 (AFDLDGTGKSQSGSNSGNNSKKRKNKSSGSSMATPTHSDSHEDMKRRRLE) are disordered. A compositionally biased stretch (low complexity) spans 178 to 189 (GKSQSGSNSGNN). The span at 208–220 (SDSHEDMKRRRLE) shows a compositional bias: basic and acidic residues.

Belongs to the Mediator complex subunit 19 family. Component of the Mediator complex, which is composed of at least 21 subunits that form three structurally distinct submodules. The Mediator head module contains MED6, MED8, MED11, SRB4/MED17, SRB5/MED18, ROX3/MED19, SRB2/MED20 and SRB6/MED22, the middle module contains MED1, MED4, NUT1/MED5, MED7, CSE2/MED9, NUT2/MED10, SRB7/MED21 and SOH1/MED31, and the tail module contains MED2, PGD1/MED3, RGR1/MED14, GAL11/MED15 and SIN4/MED16. The head and the middle modules interact directly with RNA polymerase II, whereas the elongated tail module interacts with gene-specific regulatory proteins.

Its subcellular location is the nucleus. Component of the Mediator complex, a coactivator involved in the regulated transcription of nearly all RNA polymerase II-dependent genes. Mediator functions as a bridge to convey information from gene-specific regulatory proteins to the basal RNA polymerase II transcription machinery. The Mediator complex, having a compact conformation in its free form, is recruited to promoters by direct interactions with regulatory proteins and serves for the assembly of a functional preinitiation complex with RNA polymerase II and the general transcription factors. The Mediator complex unfolds to an extended conformation and partially surrounds RNA polymerase II, specifically interacting with the unphosphorylated form of the C-terminal domain (CTD) of RNA polymerase II. The Mediator complex dissociates from the RNA polymerase II holoenzyme and stays at the promoter when transcriptional elongation begins. The sequence is that of Mediator of RNA polymerase II transcription subunit 19 (ROX3) from Saccharomyces cerevisiae (strain ATCC 204508 / S288c) (Baker's yeast).